The following is a 488-amino-acid chain: Cobyric acid synthase (488 aa).

A GATase cobBQ-type domain is found at 250–438; the sequence is DITIAIIRLP…LHGIFDNGSW (189 aa). The Nucleophile role is filled by Cys331. The active site involves His430.

Belongs to the CobB/CobQ family. CobQ subfamily.

It participates in cofactor biosynthesis; adenosylcobalamin biosynthesis. Catalyzes amidations at positions B, D, E, and G on adenosylcobyrinic A,C-diamide. NH(2) groups are provided by glutamine, and one molecule of ATP is hydrogenolyzed for each amidation. In Trichodesmium erythraeum (strain IMS101), this protein is Cobyric acid synthase.